Reading from the N-terminus, the 158-residue chain is NAD(P)H-quinone oxidoreductase subunit J, chloroplastic (158 aa).

Belongs to the complex I 30 kDa subunit family. NDH is composed of at least 16 different subunits, 5 of which are encoded in the nucleus.

It is found in the plastid. It localises to the chloroplast thylakoid membrane. The enzyme catalyses a plastoquinone + NADH + (n+1) H(+)(in) = a plastoquinol + NAD(+) + n H(+)(out). The catalysed reaction is a plastoquinone + NADPH + (n+1) H(+)(in) = a plastoquinol + NADP(+) + n H(+)(out). Its function is as follows. NDH shuttles electrons from NAD(P)H:plastoquinone, via FMN and iron-sulfur (Fe-S) centers, to quinones in the photosynthetic chain and possibly in a chloroplast respiratory chain. The immediate electron acceptor for the enzyme in this species is believed to be plastoquinone. Couples the redox reaction to proton translocation, and thus conserves the redox energy in a proton gradient. This chain is NAD(P)H-quinone oxidoreductase subunit J, chloroplastic, found in Oenothera argillicola (Appalachian evening primrose).